The chain runs to 416 residues: Gamma-glutamyl phosphate reductase (416 aa).

It belongs to the gamma-glutamyl phosphate reductase family.

It is found in the cytoplasm. The enzyme catalyses L-glutamate 5-semialdehyde + phosphate + NADP(+) = L-glutamyl 5-phosphate + NADPH + H(+). The protein operates within amino-acid biosynthesis; L-proline biosynthesis; L-glutamate 5-semialdehyde from L-glutamate: step 2/2. In terms of biological role, catalyzes the NADPH-dependent reduction of L-glutamate 5-phosphate into L-glutamate 5-semialdehyde and phosphate. The product spontaneously undergoes cyclization to form 1-pyrroline-5-carboxylate. This chain is Gamma-glutamyl phosphate reductase, found in Salmonella agona (strain SL483).